Here is a 491-residue protein sequence, read N- to C-terminus: Trigger factor (491 aa).

Residues 173–260 (GDVAVVSFSG…LDELKGRELP (88 aa)) enclose the PPIase FKBP-type domain. A disordered region spans residues 435–491 (MVDPASEDKPAKASKAKSSKAKAEKEPAAEGQAKAKPAAKTSKSKTKAAEKLITPID). The span at 463–475 (AEGQAKAKPAAKT) shows a compositional bias: low complexity.

It belongs to the FKBP-type PPIase family. Tig subfamily.

The protein localises to the cytoplasm. It catalyses the reaction [protein]-peptidylproline (omega=180) = [protein]-peptidylproline (omega=0). Functionally, involved in protein export. Acts as a chaperone by maintaining the newly synthesized protein in an open conformation. Functions as a peptidyl-prolyl cis-trans isomerase. This is Trigger factor from Synechococcus sp. (strain RCC307).